The following is a 1948-amino-acid chain: Chromodomain-helicase-DNA-binding protein 5 (1948 aa).

Disordered stretches follow at residues 1–136, 228–268, and 281–336; these read MRGP…SGQL, SPQQ…GRGK, and SKRK…GDGY. 2 stretches are compositionally biased toward acidic residues: residues 17-37 and 71-89; these read EEME…EGFE and NDEL…ESEG. Composition is skewed to basic residues over residues 95 to 114 and 250 to 268; these read TKKK…KRKK and GVRK…GRGK. Over residues 289 to 299 the composition is skewed to acidic residues; the sequence is SEEDEPEDSDL. The span at 319–328 shows a compositional bias: basic residues; sequence KKNKRRRKKK. 2 PHD-type zinc fingers span residues 341–388 and 414–461; these read QDYC…CEKE and MEFC…CTCP. The tract at residues 341–651 is histone-binding; sequence QDYCEVCQQG…HRELMLGEDA (311 aa). The region spanning 495 to 552 is the Chromo 1 domain; sequence MPPPRPLEGIPEREFFVKWAGLSYWHCSWVKELQLELYHTVMYRNYQRKNDMDEPPPF. Positions 547-569 are disordered; that stretch reads DEPPPFDYGSGDEDGKSEKRKNK. The segment covering 559–569 has biased composition (basic and acidic residues); that stretch reads EDGKSEKRKNK. The Chromo 2 domain occupies 590–651; that stretch reads MMVHRILNHS…HRELMLGEDA (62 aa). The Helicase ATP-binding domain occupies 710–894; that stretch reads RFSWAQGTDT…FHLLNFLTPE (185 aa). Residue 723–730 participates in ATP binding; the sequence is DEMGLGKT. The DEAH box motif lies at 845–848; it reads DEAH. A Helicase C-terminal domain is found at 1026–1191; that stretch reads LLQKMLKKLR…MTKQELDDIL (166 aa). 4 disordered regions span residues 1206–1250, 1349–1409, 1521–1566, and 1595–1692; these read MMSQ…VEDS, YNDA…LPPL, KYST…LPDK, and TALD…EDKN. Acidic residues-rich tracts occupy residues 1353-1364 and 1374-1383; these read SQEDQEWQDELS and SEDEDEDFEE. Residue Gln-1388 is modified to N5-methylglutamine. The span at 1547-1561 shows a compositional bias: pro residues; sequence TPVPASPAQLPPAPL. Ser-1552 is modified (phosphoserine). Basic and acidic residues-rich tracts occupy residues 1598–1625, 1633–1650, and 1657–1672; these read DRVE…EVEK, PLKE…DKLE, and NDFR…KEPT.

This sequence belongs to the SNF2/RAD54 helicase family. As to quaternary structure, component of the nucleosome remodeling and deacetylase (NuRD) repressor complex, composed of core proteins MTA1, MTA2, MTA3, RBBP4, RBBP7, HDAC1, HDAC2, MBD2, MBD3, and peripherally associated proteins CDK2AP1, CDK2AP2, GATAD2A, GATAD2B, CHD3, CHD4 and CHD5. The exact stoichiometry of the NuRD complex is unknown, and some subunits such as MBD2 and MBD3, GATAD2A and GATAD2B, and CHD3, CHD4 and CHD5 define mutually exclusive NuRD complexes. Interacts with HDAC2. In terms of processing, methylated at Gln-1388 by N6AMT1. As to expression, expressed in brain regions enriched in neurons and not in regions rich in glial cells (at protein level).

It is found in the nucleus. It localises to the chromosome. The enzyme catalyses ATP + H2O = ADP + phosphate + H(+). Its function is as follows. ATP-dependent chromatin-remodeling factor that binds DNA through histones and regulates gene transcription. May specifically recognize and bind trimethylated 'Lys-27' (H3K27me3) and non-methylated 'Lys-4' of histone H3. Acts as a component of the histone deacetylase NuRD complex which participates in the remodeling of chromatin. Plays a role in the development of the nervous system by activating the expression of genes promoting neuron terminal differentiation. In parallel, it may also positively regulate the trimethylation of histone H3 at 'Lys-27' thereby specifically repressing genes that promote the differentiation into non-neuronal cell lineages. Regulates the expression of genes involved in cell proliferation and differentiation. Downstream activated genes may include CDKN2A that positively regulates the p53/TP53 pathway, which in turn, prevents cell proliferation. In spermatogenesis, it probably regulates histone hyperacetylation and the replacement of histones by transition proteins in chromatin, a crucial step in the condensation of spermatid chromatin and the production of functional spermatozoa. This is Chromodomain-helicase-DNA-binding protein 5 (Chd5) from Rattus norvegicus (Rat).